A 504-amino-acid polypeptide reads, in one-letter code: Glycerol kinase (504 aa).

Thr-12 serves as a coordination point for ADP. The ATP site is built by Thr-12, Thr-13, and Ser-14. Thr-12 contributes to the sn-glycerol 3-phosphate binding site. Arg-16 contributes to the ADP binding site. Residues Arg-82, Glu-83, Tyr-134, and Asp-249 each contribute to the sn-glycerol 3-phosphate site. Glycerol-binding residues include Arg-82, Glu-83, Tyr-134, Asp-249, and Gln-250. ADP-binding residues include Thr-271 and Gly-315. Residues Thr-271, Gly-315, Gln-319, and Gly-416 each coordinate ATP. 2 residues coordinate ADP: Gly-416 and Asn-420.

This sequence belongs to the FGGY kinase family.

It catalyses the reaction glycerol + ATP = sn-glycerol 3-phosphate + ADP + H(+). Its pathway is polyol metabolism; glycerol degradation via glycerol kinase pathway; sn-glycerol 3-phosphate from glycerol: step 1/1. With respect to regulation, inhibited by fructose 1,6-bisphosphate (FBP). In terms of biological role, key enzyme in the regulation of glycerol uptake and metabolism. Catalyzes the phosphorylation of glycerol to yield sn-glycerol 3-phosphate. In Mycobacteroides abscessus (strain ATCC 19977 / DSM 44196 / CCUG 20993 / CIP 104536 / JCM 13569 / NCTC 13031 / TMC 1543 / L948) (Mycobacterium abscessus), this protein is Glycerol kinase.